Reading from the N-terminus, the 417-residue chain is Serine hydroxymethyltransferase (417 aa).

(6S)-5,6,7,8-tetrahydrofolate contacts are provided by residues Leu121 and 125-127 (GHL). Residue Lys229 is modified to N6-(pyridoxal phosphate)lysine. 355 to 357 (SPF) lines the (6S)-5,6,7,8-tetrahydrofolate pocket.

It belongs to the SHMT family. In terms of assembly, homodimer. Pyridoxal 5'-phosphate serves as cofactor.

Its subcellular location is the cytoplasm. The enzyme catalyses (6R)-5,10-methylene-5,6,7,8-tetrahydrofolate + glycine + H2O = (6S)-5,6,7,8-tetrahydrofolate + L-serine. Its pathway is one-carbon metabolism; tetrahydrofolate interconversion. It participates in amino-acid biosynthesis; glycine biosynthesis; glycine from L-serine: step 1/1. Its function is as follows. Catalyzes the reversible interconversion of serine and glycine with tetrahydrofolate (THF) serving as the one-carbon carrier. This reaction serves as the major source of one-carbon groups required for the biosynthesis of purines, thymidylate, methionine, and other important biomolecules. Also exhibits THF-independent aldolase activity toward beta-hydroxyamino acids, producing glycine and aldehydes, via a retro-aldol mechanism. The chain is Serine hydroxymethyltransferase from Salmonella paratyphi C (strain RKS4594).